The sequence spans 72 residues: Translation initiation factor IF-1 (72 aa).

In terms of domain architecture, S1-like spans methionine 1–arginine 72.

Belongs to the IF-1 family. Component of the 30S ribosomal translation pre-initiation complex which assembles on the 30S ribosome in the order IF-2 and IF-3, IF-1 and N-formylmethionyl-tRNA(fMet); mRNA recruitment can occur at any time during PIC assembly.

The protein resides in the cytoplasm. In terms of biological role, one of the essential components for the initiation of protein synthesis. Stabilizes the binding of IF-2 and IF-3 on the 30S subunit to which N-formylmethionyl-tRNA(fMet) subsequently binds. Helps modulate mRNA selection, yielding the 30S pre-initiation complex (PIC). Upon addition of the 50S ribosomal subunit IF-1, IF-2 and IF-3 are released leaving the mature 70S translation initiation complex. This is Translation initiation factor IF-1 from Solibacter usitatus (strain Ellin6076).